Here is a 397-residue protein sequence, read N- to C-terminus: Acetate kinase (397 aa).

A Mg(2+)-binding site is contributed by Asn8. An ATP-binding site is contributed by Lys15. Residue Arg90 coordinates substrate. Asp147 serves as the catalytic Proton donor/acceptor. Position 207 to 211 (His207 to Gly211) interacts with ATP. Mg(2+) is bound at residue Glu382.

Belongs to the acetokinase family. As to quaternary structure, homodimer. Mg(2+) is required as a cofactor. The cofactor is Mn(2+).

It is found in the cytoplasm. It catalyses the reaction acetate + ATP = acetyl phosphate + ADP. It participates in metabolic intermediate biosynthesis; acetyl-CoA biosynthesis; acetyl-CoA from acetate: step 1/2. Its function is as follows. Catalyzes the formation of acetyl phosphate from acetate and ATP. Can also catalyze the reverse reaction. The chain is Acetate kinase from Lactiplantibacillus plantarum (strain ATCC BAA-793 / NCIMB 8826 / WCFS1) (Lactobacillus plantarum).